Consider the following 1177-residue polypeptide: Solute carrier family 9 member C1 (1177 aa).

The Extracellular portion of the chain corresponds to 1-17; sequence MAGIFKEFFFSTEDLPE. A helical transmembrane segment spans residues 18–37; sequence VILTLSLISSIGAFLNRHLE. Over 38–42 the chain is Cytoplasmic; sequence DFPIP. Residues 43–60 form a helical membrane-spanning segment; the sequence is VPVILFLLGCSFEVLSFT. Topologically, residues 61–76 are extracellular; that stretch reads SSQVQRYANAIQWMSP. Residues 77 to 93 traverse the membrane as a helical segment; it reads DLFFRIFTPVVFFTTAF. Over 94 to 103 the chain is Cytoplasmic; it reads DMDTYMLQKL. The helical transmembrane segment at 104 to 129 threads the bilayer; it reads FWQILLISIPGFLVNYILVLWHLASV. Positions 104–191 are transport core domain; that stretch reads FWQILLISIP…SLITFTSIMD (88 aa). The Extracellular segment spans residues 130–135; sequence NQLLLK. A helical transmembrane segment spans residues 136 to 161; it reads PTQWLLFSAILVSSDPMLTAAAIRDL. At 162-164 the chain is on the cytoplasmic side; it reads GLS. Residues 165–190 form a helical membrane-spanning segment; it reads RSLISLINGESLMTSVISLITFTSIM. The Extracellular portion of the chain corresponds to 191–204; it reads DFDQRLQSKRNHTL. A helical membrane pass occupies residues 205 to 236; it reads AEEIVGGICSYIIASFLFGILSSKLIQFWMST. The Cytoplasmic portion of the chain corresponds to 237–240; the sequence is VFGD. Residues 241–262 traverse the membrane as a helical segment; sequence DVNHISLIFSILYLIFYICELV. At 263–265 the chain is on the extracellular side; sequence GMS. A helical membrane pass occupies residues 266–279; sequence GIFTLAIVGLLLNS. The Cytoplasmic segment spans residues 280–286; that stretch reads TSFKAAI. Residues 287–319 traverse the membrane as a helical segment; that stretch reads EETLLLEFWTFLSRIAFLMVFTFFGLLIPAHTY. At 320 to 324 the chain is on the extracellular side; it reads LYIEF. Residues 325 to 354 traverse the membrane as a helical segment; the sequence is VDIYYSLNIYLTLIVLRFLTLLLISPVLSR. Residues 325-426 form a transport core domain region; sequence VDIYYSLNIY…FILPVAVTIL (102 aa). The Cytoplasmic segment spans residues 355 to 360; the sequence is VGHEFS. The chain crosses the membrane as a helical span at residues 361–391; it reads WRWIFIMVCSEMKGMPNINMALLLAYSDLYF. Residues 392–395 lie on the Extracellular side of the membrane; it reads GSDK. The chain crosses the membrane as a helical span at residues 396–426; the sequence is EKSQILFHGVLVCLITLVVNRFILPVAVTIL. Residues 427–612 are Cytoplasmic-facing; sequence GLRDATSTKY…ICHTIVFTEE (186 aa). An ion transport-like region spans residues 598-678; that stretch reads YFFFRICHTI…DFFSHAWNIF (81 aa). The chain crosses the membrane as a helical span at residues 613-633; it reads FEHVGYLVILMNIFPFIISWI. The Extracellular portion of the chain corresponds to 634–637; it reads SQLN. The helical transmembrane segment at 638 to 664 threads the bilayer; sequence VIYHSELKHTNYCFLTLYILEALLKIA. Residues 665 to 671 are Cytoplasmic-facing; it reads AMRKDFF. A helical membrane pass occupies residues 672 to 696; sequence SHAWNIFELAITLIGILHVILIEID. At 697–704 the chain is on the extracellular side; the sequence is TIKYIFNE. Residues 705–731 traverse the membrane as a helical segment; it reads TEVIVFIKVVQFFRILRIFKLIAPKLL. At 732–1177 the chain is on the cytoplasmic side; the sequence is QIIDKRMSHQ…RINLRKVRKE (446 aa).

The protein belongs to the monovalent cation:proton antiporter 1 (CPA1) transporter (TC 2.A.36) family. Interacts with soluble adenylyl cyclase (sAC). Sperm.

It is found in the cell projection. The protein localises to the cilium. It localises to the flagellum membrane. In terms of biological role, sperm-specific solute carrier involved in intracellular pH regulation of spermatozoa. Required for sperm motility and fertility. Involved in sperm cell hyperactivation, a step needed for sperm motility which is essential late in the preparation of sperm for fertilization. Required for the expression and bicarbonate regulation of the soluble adenylyl cyclase (sAC). This chain is Solute carrier family 9 member C1 (SLC9C1), found in Homo sapiens (Human).